Consider the following 229-residue polypeptide: Methyltransferase ctvB (229 aa).

Belongs to the methyltransferase superfamily.

Its pathway is mycotoxin biosynthesis. In terms of biological role, methyltransferase; part of the gene cluster that mediates the biosynthesis of citreoviridin, an inhibitor of the of F1-ATPase beta-subunit. The HR-PKS ctvA accepts acetyl-CoA as the starter unit and catalyzes eight iterations of malonyl-CoA extension and four iterations of SAM-dependent methylation at C4, C12, C14, and C16. The KR and DH domains selectively act on the first six iterations to generate the hexaene chain. In the last three iterations, the KR and DH domains terminate their functions to yield a beta,delta-diketo ester moiety, which then undergoes intramolecular cyclization to yield an alpha-pyrone intermediate. Subsequently, ctvB methylates the alpha-pyrone hydroxyl group to generate citreomontanin. In order to form the tetrahydrofuran ring with the correct stereochemistry, the terminal alkenes of citreomontanin need to undergo isomerization to yield a (17Z)-hexaene, a step that could be catalyzed by ctvC. The (17Z)-hexaene then undergoes bisepoxidation by ctvC to form a (17R,16R,15S,14R)-bisepoxide moiety. Lastly, ctvD acts as a regioselective hydrolase to form the tetrahydrofuran ring with the substituents in the correct absolute configuration, completing the biosynthesis of citreoviridin. The chain is Methyltransferase ctvB from Aspergillus terreus (strain NIH 2624 / FGSC A1156).